We begin with the raw amino-acid sequence, 190 residues long: Xanthine phosphoribosyltransferase 1 (190 aa).

Xanthine-binding residues include Leu20 and Asn27. 129 to 133 (AQGCA) provides a ligand contact to 5-phospho-alpha-D-ribose 1-diphosphate. Lys157 is a binding site for xanthine.

Belongs to the purine/pyrimidine phosphoribosyltransferase family. Xpt subfamily. In terms of assembly, homodimer.

The protein localises to the cytoplasm. The catalysed reaction is XMP + diphosphate = xanthine + 5-phospho-alpha-D-ribose 1-diphosphate. It participates in purine metabolism; XMP biosynthesis via salvage pathway; XMP from xanthine: step 1/1. Functionally, converts the preformed base xanthine, a product of nucleic acid breakdown, to xanthosine 5'-monophosphate (XMP), so it can be reused for RNA or DNA synthesis. In Clostridium perfringens (strain ATCC 13124 / DSM 756 / JCM 1290 / NCIMB 6125 / NCTC 8237 / Type A), this protein is Xanthine phosphoribosyltransferase 1.